The sequence spans 132 residues: Hemoglobin subunit beta-1 (132 aa).

Residues 1 to 132 form the Globin domain; the sequence is WSKIDIDVCG…VVSALGRQYH (132 aa). Residues histidine 49 and histidine 78 each contribute to the heme b site.

It belongs to the globin family. As to quaternary structure, hb 1 is a heterotetramer of two alpha-1 and two beta-1 chains. Hb 2 is a heterotetramer of two alpha-2 and two beta-1 chains. As to expression, red blood cells.

Its function is as follows. Involved in oxygen transport from gills to the various peripheral tissues. The polypeptide is Hemoglobin subunit beta-1 (hbb1) (Arctogadus glacialis (Arctic cod)).